Here is a 246-residue protein sequence, read N- to C-terminus: Glutamate/aspartate import permease protein GltJ (246 aa).

Positions 29–230 (FQVTIALSIC…LINAFIMLVM (202 aa)) constitute an ABC transmembrane type-1 domain. A run of 5 helical transmembrane segments spans residues 33–53 (IALSICAWIIAFLVGSFFGIL), 74–94 (NVPLIVQFFTWYLVIPELLPE), 104–124 (LDPNIQFFLSSMLCLGLFTAA), 179–196 (LVKNSAIASTIGLVDMAA), and 212–232 (FTAITLAYVLINAFIMLVMTL).

Belongs to the binding-protein-dependent transport system permease family. HisMQ subfamily. The complex is composed of two ATP-binding proteins (GltL), two transmembrane proteins (GltJ and GltK) and a solute-binding protein (GltI).

The protein localises to the cell inner membrane. Functionally, part of the ABC transporter complex GltIJKL involved in glutamate and aspartate uptake. Probably responsible for the translocation of the substrate across the membrane. This is Glutamate/aspartate import permease protein GltJ (gltJ) from Escherichia coli O6:H1 (strain CFT073 / ATCC 700928 / UPEC).